Reading from the N-terminus, the 437-residue chain is GTPase Der (437 aa).

EngA-type G domains are found at residues 3 to 167 and 176 to 352; these read NLVA…SKEG and PRFA…QART. Residues 9 to 16, 56 to 60, 119 to 122, 182 to 189, 229 to 233, and 294 to 297 each bind GTP; these read GRPNVGKS, DTGGW, NKTD, GRPNAGKS, DTAGI, and NKWD. The 85-residue stretch at 353 to 437 folds into the KH-like domain; it reads TRIPTARLNE…TPINIFIRQK (85 aa).

The protein belongs to the TRAFAC class TrmE-Era-EngA-EngB-Septin-like GTPase superfamily. EngA (Der) GTPase family. In terms of assembly, associates with the 50S ribosomal subunit.

Its function is as follows. GTPase that plays an essential role in the late steps of ribosome biogenesis. This Phocaeicola vulgatus (strain ATCC 8482 / DSM 1447 / JCM 5826 / CCUG 4940 / NBRC 14291 / NCTC 11154) (Bacteroides vulgatus) protein is GTPase Der.